The sequence spans 334 residues: N-acetyl-gamma-glutamyl-phosphate reductase (334 aa).

Cys154 is an active-site residue.

The protein belongs to the NAGSA dehydrogenase family. Type 1 subfamily.

Its subcellular location is the cytoplasm. It carries out the reaction N-acetyl-L-glutamate 5-semialdehyde + phosphate + NADP(+) = N-acetyl-L-glutamyl 5-phosphate + NADPH + H(+). Its pathway is amino-acid biosynthesis; L-arginine biosynthesis; N(2)-acetyl-L-ornithine from L-glutamate: step 3/4. Its function is as follows. Catalyzes the NADPH-dependent reduction of N-acetyl-5-glutamyl phosphate to yield N-acetyl-L-glutamate 5-semialdehyde. In Escherichia coli O6:H1 (strain CFT073 / ATCC 700928 / UPEC), this protein is N-acetyl-gamma-glutamyl-phosphate reductase.